Here is a 258-residue protein sequence, read N- to C-terminus: Acyl-[acyl-carrier-protein]--UDP-N-acetylglucosamine O-acyltransferase (258 aa).

This sequence belongs to the transferase hexapeptide repeat family. LpxA subfamily. In terms of assembly, homotrimer.

The protein resides in the cytoplasm. The enzyme catalyses a (3R)-hydroxyacyl-[ACP] + UDP-N-acetyl-alpha-D-glucosamine = a UDP-3-O-[(3R)-3-hydroxyacyl]-N-acetyl-alpha-D-glucosamine + holo-[ACP]. It functions in the pathway glycolipid biosynthesis; lipid IV(A) biosynthesis; lipid IV(A) from (3R)-3-hydroxytetradecanoyl-[acyl-carrier-protein] and UDP-N-acetyl-alpha-D-glucosamine: step 1/6. In terms of biological role, involved in the biosynthesis of lipid A, a phosphorylated glycolipid that anchors the lipopolysaccharide to the outer membrane of the cell. In Neisseria meningitidis serogroup A / serotype 4A (strain DSM 15465 / Z2491), this protein is Acyl-[acyl-carrier-protein]--UDP-N-acetylglucosamine O-acyltransferase.